Reading from the N-terminus, the 343-residue chain is Anthranilate phosphoribosyltransferase (343 aa).

5-phospho-alpha-D-ribose 1-diphosphate-binding positions include G86, 89–90, T94, 96–99, 114–122, and S126; these read GD, NIST, and KHGNRSASG. G86 serves as a coordination point for anthranilate. Mg(2+) is bound at residue S98. N117 lines the anthranilate pocket. R172 contacts anthranilate. Mg(2+)-binding residues include D231 and E232.

This sequence belongs to the anthranilate phosphoribosyltransferase family. In terms of assembly, homodimer. Requires Mg(2+) as cofactor.

It carries out the reaction N-(5-phospho-beta-D-ribosyl)anthranilate + diphosphate = 5-phospho-alpha-D-ribose 1-diphosphate + anthranilate. The protein operates within amino-acid biosynthesis; L-tryptophan biosynthesis; L-tryptophan from chorismate: step 2/5. In terms of biological role, catalyzes the transfer of the phosphoribosyl group of 5-phosphorylribose-1-pyrophosphate (PRPP) to anthranilate to yield N-(5'-phosphoribosyl)-anthranilate (PRA). This Synechococcus sp. (strain JA-3-3Ab) (Cyanobacteria bacterium Yellowstone A-Prime) protein is Anthranilate phosphoribosyltransferase.